A 229-amino-acid chain; its full sequence is Ribonuclease 3 (229 aa).

Residues 5–136 (LAELERALGI…VIGAIYLDQG (132 aa)) form the RNase III domain. Glu-49 is a binding site for Mg(2+). Residue Asp-53 is part of the active site. Mg(2+) contacts are provided by Asp-122 and Glu-125. Residue Glu-125 is part of the active site. A DRBM domain is found at 161-229 (DPTTRLQEIV…AQAALADIDR (69 aa)).

Belongs to the ribonuclease III family. Homodimer. Mg(2+) serves as cofactor.

It localises to the cytoplasm. The catalysed reaction is Endonucleolytic cleavage to 5'-phosphomonoester.. Digests double-stranded RNA. Involved in the processing of primary rRNA transcript to yield the immediate precursors to the large and small rRNAs (23S and 16S). Processes some mRNAs, and tRNAs when they are encoded in the rRNA operon. Processes pre-crRNA and tracrRNA of type II CRISPR loci if present in the organism. The chain is Ribonuclease 3 from Chloroflexus aggregans (strain MD-66 / DSM 9485).